We begin with the raw amino-acid sequence, 334 residues long: MSNKIMKTSRLTAEDINGAWTIMPTPSTPDASDWRSTATVDLEETARIVEELIAAGVNGILSMGTFGECATLTWDEKRDYVSTIVETIRGRVPYFCGTTALNTREVIRQTRELIDIGANGTMLGVPMWVKMDLPTAVQFYRDVADAVPEAAIAIYANPEAFKFDFPRPFWAEMSKIPQVVTAKYLGIGMLDLDLRLAPNIRFLPHEDDYYAAARINPERITAFWSSGAMCGPATAIMLRDEVVRAKSTGDWAKAKAISDDMRAADSTLFPRGDFSEFSKYNIGLEKARMDAAGWLKAGPCRPPYNLVPEDYLAGAQKSGKAWAALHAKYSNELK.

It belongs to the DapA family.

The catalysed reaction is (3E)-4-(2-hydroxyphenyl)-2-oxobut-3-enoate + H2O = salicylaldehyde + pyruvate. It functions in the pathway aromatic compound metabolism; naphthalene degradation. In terms of biological role, involved in the naphthalene upper catabolic pathway. Catalyzes the transformation of trans-O-hydroxybenzylidenepyruvate (THBPA) to salicylaldehyde and pyruvate. The reaction is reversible. The chain is Trans-O-hydroxybenzylidenepyruvate hydratase-aldolase (pahE) from Pseudomonas aeruginosa.